Consider the following 391-residue polypeptide: Phosphoglycerate kinase (391 aa).

Substrate contacts are provided by residues 21-23 (DLN), arginine 36, 59-62 (HLGR), arginine 113, and arginine 146. Residues lysine 197, glutamate 319, and 345–348 (GGDT) contribute to the ATP site.

Belongs to the phosphoglycerate kinase family. Monomer.

The protein resides in the cytoplasm. It carries out the reaction (2R)-3-phosphoglycerate + ATP = (2R)-3-phospho-glyceroyl phosphate + ADP. It participates in carbohydrate degradation; glycolysis; pyruvate from D-glyceraldehyde 3-phosphate: step 2/5. In Shewanella baltica (strain OS195), this protein is Phosphoglycerate kinase.